Reading from the N-terminus, the 333-residue chain is Electron transfer flavoprotein subunit alpha, mitochondrial (333 aa).

A mitochondrion-targeting transit peptide spans 1–19 (MFRAAAPGQLRRAASSLRF). The tract at residues 20-204 (QSTLVIAEHA…EISEWLDQKL (185 aa)) is domain I. Lys-59 carries the N6-acetyllysine; alternate modification. At Lys-59 the chain carries N6-succinyllysine; alternate. An N6-acetyllysine modification is found at Lys-62. Lys-69 carries the N6-acetyllysine; alternate modification. Lys-69 is subject to N6-succinyllysine; alternate. Residue Lys-75 is modified to N6-acetyllysine. At Thr-93 the chain carries Phosphothreonine. 2 positions are modified to N6-acetyllysine: Lys-101 and Lys-139. Ser-140 carries the post-translational modification Phosphoserine. Lys-158 is subject to N6-acetyllysine; alternate. Lys-158 is subject to N6-succinyllysine; alternate. At Lys-164 the chain carries N6-acetyllysine. Lys-187 bears the N6-succinyllysine mark. The residue at position 203 (Lys-203) is an N6-acetyllysine; alternate. Lys-203 carries the N6-succinyllysine; alternate modification. Residues 205-333 (TKSDRPELTG…PEMTEILKKK (129 aa)) form a domain II region. Position 216 is an N6-succinyllysine (Lys-216). Arg-223 contributes to the FAD binding site. N6-acetyllysine; alternate is present on residues Lys-226 and Lys-232. An N6-succinyllysine; alternate mark is found at Lys-226 and Lys-232. FAD-binding positions include Ser-248, 263-266 (VGQT), 281-286 (SGAIQH), and Asn-300. At Lys-301 the chain carries N6-succinyllysine. 318–319 (DL) is a binding site for FAD.

The protein belongs to the ETF alpha-subunit/FixB family. In terms of assembly, heterodimer composed of ETFA and ETFB. Identified in a complex that contains ETFA, ETFB and ETFRF1. Interaction with ETFRF1 promotes dissociation of the bound FAD and loss of electron transfer activity. Interacts with TASOR. It depends on FAD as a cofactor.

The protein localises to the mitochondrion matrix. Functionally, heterodimeric electron transfer flavoprotein that accepts electrons from several mitochondrial dehydrogenases, including acyl-CoA dehydrogenases, glutaryl-CoA and sarcosine dehydrogenase. It transfers the electrons to the main mitochondrial respiratory chain via ETF-ubiquinone oxidoreductase (ETF dehydrogenase). Required for normal mitochondrial fatty acid oxidation and normal amino acid metabolism. The protein is Electron transfer flavoprotein subunit alpha, mitochondrial (ETFA) of Macaca fascicularis (Crab-eating macaque).